We begin with the raw amino-acid sequence, 495 residues long: Divinyl ether synthase CYP74M3 (495 aa).

Cys446 serves as a coordination point for heme.

It belongs to the cytochrome P450 family. Requires heme as cofactor.

It carries out the reaction (13S)-hydroperoxy-(9Z,11E)-octadecadienoate = etheroleate + H2O. It catalyses the reaction (13S)-hydroperoxy-(9Z,11E,15Z)-octadecatrienoate = etherolenate + H2O. It functions in the pathway lipid metabolism; oxylipin biosynthesis. Its function is as follows. Divinyl ether synthase involved in oxylipin biosynthesis. Catalyzes the conversion of (13S)-hydroperoxy-(9Z,11E)-octadecadienoate (13-HPOD) to etheroleate and (13S)-hydroperoxy-(9Z,11E,15Z)-octadecatrienoate (13-HPOT) to etherolenate. Has no activity with the corresponding 9-hydroperoxides (9-HPOD and 9-HPOT). This Selaginella moellendorffii (Spikemoss) protein is Divinyl ether synthase CYP74M3.